We begin with the raw amino-acid sequence, 475 residues long: Enolase (475 aa).

Glutamine 179 contributes to the (2R)-2-phosphoglycerate binding site. The active-site Proton donor is the glutamate 221. Residues aspartate 258, glutamate 312, and aspartate 339 each coordinate Mg(2+). (2R)-2-phosphoglycerate contacts are provided by lysine 364, arginine 393, serine 394, and lysine 415. The active-site Proton acceptor is the lysine 364. The disordered stretch occupies residues 454–475 (STPAATPKKSPAKKTTKAKSKK). The segment covering 463–475 (SPAKKTTKAKSKK) has biased composition (basic residues).

The protein belongs to the enolase family. The cofactor is Mg(2+).

It is found in the cell membrane. Its subcellular location is the cytoplasm. The protein resides in the secreted. The protein localises to the cell surface. The catalysed reaction is (2R)-2-phosphoglycerate = phosphoenolpyruvate + H2O. It functions in the pathway carbohydrate degradation; glycolysis; pyruvate from D-glyceraldehyde 3-phosphate: step 4/5. Its function is as follows. Catalyzes the reversible conversion of 2-phosphoglycerate (2-PG) into phosphoenolpyruvate (PEP). It is essential for the degradation of carbohydrates via glycolysis. Functionally, 'Moonlights' as a plasminogen receptor. Binds host (chicken) plasminogen; enolase antiserum inhibits M.gallisepticum adherence to chicken embryo fibroblasts. The protein is Enolase of Mycoplasmoides gallisepticum (strain R(low / passage 15 / clone 2)) (Mycoplasma gallisepticum).